We begin with the raw amino-acid sequence, 194 residues long: Peptidyl-tRNA hydrolase (194 aa).

Position 16 (Y16) interacts with tRNA. The Proton acceptor role is filled by H21. TRNA is bound by residues F67, N69, and N115.

The protein belongs to the PTH family. As to quaternary structure, monomer.

The protein resides in the cytoplasm. The enzyme catalyses an N-acyl-L-alpha-aminoacyl-tRNA + H2O = an N-acyl-L-amino acid + a tRNA + H(+). Hydrolyzes ribosome-free peptidyl-tRNAs (with 1 or more amino acids incorporated), which drop off the ribosome during protein synthesis, or as a result of ribosome stalling. Its function is as follows. Catalyzes the release of premature peptidyl moieties from peptidyl-tRNA molecules trapped in stalled 50S ribosomal subunits, and thus maintains levels of free tRNAs and 50S ribosomes. The sequence is that of Peptidyl-tRNA hydrolase from Salmonella agona (strain SL483).